The chain runs to 510 residues: ATP synthase subunit alpha (510 aa).

169–176 (GDRQTGKT) lines the ATP pocket.

It belongs to the ATPase alpha/beta chains family. As to quaternary structure, F-type ATPases have 2 components, CF(1) - the catalytic core - and CF(0) - the membrane proton channel. CF(1) has five subunits: alpha(3), beta(3), gamma(1), delta(1), epsilon(1). CF(0) has three main subunits: a(1), b(2) and c(9-12). The alpha and beta chains form an alternating ring which encloses part of the gamma chain. CF(1) is attached to CF(0) by a central stalk formed by the gamma and epsilon chains, while a peripheral stalk is formed by the delta and b chains.

The protein localises to the cell membrane. It carries out the reaction ATP + H2O + 4 H(+)(in) = ADP + phosphate + 5 H(+)(out). In terms of biological role, produces ATP from ADP in the presence of a proton gradient across the membrane. The alpha chain is a regulatory subunit. The polypeptide is ATP synthase subunit alpha (Buchnera aphidicola subsp. Schizaphis graminum (strain Sg)).